The sequence spans 175 residues: Inorganic pyrophosphatase 1 (175 aa).

Positions 30, 44, and 56 each coordinate substrate. Residues Asp66, Asp71, and Asp103 each contribute to the Mg(2+) site. A substrate-binding site is contributed by Tyr142.

The protein belongs to the PPase family. As to quaternary structure, homohexamer. Mg(2+) serves as cofactor.

It is found in the cytoplasm. It catalyses the reaction diphosphate + H2O = 2 phosphate + H(+). Its function is as follows. Catalyzes the hydrolysis of inorganic pyrophosphate (PPi) forming two phosphate ions. In Pseudomonas syringae pv. tomato (strain ATCC BAA-871 / DC3000), this protein is Inorganic pyrophosphatase 1.